A 293-amino-acid polypeptide reads, in one-letter code: Sphingolipid C4-hydroxylase sur2 (293 aa).

3 helical membrane-spanning segments follow: residues 18–38 (LVSP…LHYI), 68–88 (AVLF…MFEG), and 127–147 (FIVP…WQYF). In terms of domain architecture, Fatty acid hydroxylase spans 136-270 (FAFFIIDSWQ…FTFWDHVLGT (135 aa)).

The protein belongs to the sterol desaturase family.

The protein localises to the endoplasmic reticulum membrane. It functions in the pathway membrane lipid metabolism; sphingolipid biosynthesis. In terms of biological role, required for hydroxylation of C-4 in the sphingoid moiety of ceramide. Involved in the response to syringomycin. The polypeptide is Sphingolipid C4-hydroxylase sur2 (sur2) (Schizosaccharomyces pombe (strain 972 / ATCC 24843) (Fission yeast)).